Here is a 264-residue protein sequence, read N- to C-terminus: MQIVILKNSAEVAEYGANIFKKQLQSKPDSVLGLATGSTPVSLYQGLIEANKLGDISFKEVTSFNLDEYLGLAGTHPQSYRYFMNEQLFDHIDIDKANTHVPPGDAENPIQACDGYEEQIQAAGGIDIQLLGIGRNGHIGFNEPSSGLMSRTRVKTLTKATIEDNARFFKEDEYQPHLSITMGIGTILDAKKVVLLATGENKADAILATVEGALTASCPASALQLHKNAVLVIDEAAASKLSDRDFYKHIEAENQKLLARLAKS.

Aspartate 67 acts as the Proton acceptor; for enolization step in catalysis. Asparagine 136 functions as the For ring-opening step in the catalytic mechanism. Histidine 138 serves as the catalytic Proton acceptor; for ring-opening step. Glutamate 143 serves as the catalytic For ring-opening step.

Belongs to the glucosamine/galactosamine-6-phosphate isomerase family. NagB subfamily. As to quaternary structure, homohexamer.

It carries out the reaction alpha-D-glucosamine 6-phosphate + H2O = beta-D-fructose 6-phosphate + NH4(+). It functions in the pathway amino-sugar metabolism; N-acetylneuraminate degradation; D-fructose 6-phosphate from N-acetylneuraminate: step 5/5. Functionally, catalyzes the reversible isomerization-deamination of glucosamine 6-phosphate (GlcN6P) to form fructose 6-phosphate (Fru6P) and ammonium ion. The chain is Glucosamine-6-phosphate deaminase from Shewanella woodyi (strain ATCC 51908 / MS32).